The following is a 204-amino-acid chain: MKLTVILLTAVLAASASPAPVDVDARAPVALDSRSPIDIDSRSADALANRAAPPQSEIDQWLKAHNNERAQHGAVALVWNQTLSDKAADWASQCIWEHSNSGQNLAAWFSPQANKPMNISQGVGGWNAEEPDYNTTTYSGAGHWTQVVWKSTTSVGCAAYSCPPGTLGRKPTDPWKTLWYYVCNYYRPGNVSPRDKYYPINVQP.

The first 16 residues, Met1–Ala16, serve as a signal peptide directing secretion. One can recognise an SCP domain in the interval Leu62–Tyr185. N-linked (GlcNAc...) asparagine glycans are attached at residues Asn80, Asn118, and Asn134.

This sequence belongs to the CRISP family.

Its subcellular location is the secreted. The sequence is that of Fruiting body protein SC7 (SC7) from Schizophyllum commune (Split gill fungus).